A 210-amino-acid chain; its full sequence is MPSLLIIVLIIHVVTYLINTIGANTIDSLLWLLYLKLPNQTSQTADEQRRLKREVMQLKREMNATSSQDEFAKWAKLRRRHDKTMEEYEAKNKALGKHKSSFDLAVKSVRFFSTTGLKLFLQFWFSKTPIFELPRGWIPWQVEWVLSFPRAPLGTVSIQIWGGVCATVVSLAGDAIGVVNVYLTSKAPKQKEPATSGENSARPMAIKKEL.

The Lumenal portion of the chain corresponds to 1–4; sequence MPSL. The helical transmembrane segment at 5–24 threads the bilayer; the sequence is LIIVLIIHVVTYLINTIGAN. Residues 25-110 lie on the Cytoplasmic side of the membrane; it reads TIDSLLWLLY…SFDLAVKSVR (86 aa). The stretch at 39–95 forms a coiled coil; the sequence is NQTSQTADEQRRLKREVMQLKREMNATSSQDEFAKWAKLRRRHDKTMEEYEAKNKAL. A helical transmembrane segment spans residues 111 to 131; it reads FFSTTGLKLFLQFWFSKTPIF. The Lumenal portion of the chain corresponds to 132-155; that stretch reads ELPRGWIPWQVEWVLSFPRAPLGT. The chain crosses the membrane as a helical span at residues 156–172; the sequence is VSIQIWGGVCATVVSLA. Residues 173 to 210 are Cytoplasmic-facing; sequence GDAIGVVNVYLTSKAPKQKEPATSGENSARPMAIKKEL. A disordered region spans residues 189 to 210; it reads KQKEPATSGENSARPMAIKKEL.

Belongs to the WRB/GET1 family. In terms of assembly, interacts with GET3.

Its subcellular location is the endoplasmic reticulum membrane. Its function is as follows. Required for the post-translational delivery of tail-anchored (TA) proteins to the endoplasmic reticulum. Acts as a membrane receptor for soluble GET3, which recognizes and selectively binds the transmembrane domain of TA proteins in the cytosol. This Coccidioides posadasii (strain C735) (Valley fever fungus) protein is Protein GET1.